We begin with the raw amino-acid sequence, 1365 residues long: Histone-lysine N-methyltransferase NSD2 (1365 aa).

2 positions are modified to phosphothreonine: Thr-110 and Thr-114. Residue Ser-121 is modified to Phosphoserine. The tract at residues 149–169 is disordered; that stretch reads ADVSQSEENEQKSDNKTRRNR. Ser-172 bears the Phosphoserine mark. The 65-residue stretch at 222–286 folds into the PWWP 1 domain; the sequence is VGDLVWSKVS…FEKSLVAFEG (65 aa). Disordered stretches follow at residues 373 to 455, 513 to 567, and 594 to 658; these read MVDS…RKGD, QSEE…DKTA, and CKPL…SKKS. Residue Ser-376 is modified to Phosphoserine. Thr-422 bears the Phosphothreonine mark. The segment at residues 453–521 is a DNA-binding region (HMG box); it reads KGDSAAQFLV…AQSEEDSGNG (69 aa). The span at 552 to 567 shows a compositional bias: basic and acidic residues; that stretch reads DKHSLRKRETITDKTA. A compositionally biased stretch (polar residues) spans 603–623; that stretch reads ASATASSALGFNKSSSPSASL. The segment covering 632–648 has biased composition (acidic residues); it reads PGDEPSESPYESADETQ. 3 PHD-type zinc fingers span residues 667 to 713, 714 to 770, and 831 to 875; these read EYVC…CASG, IHSC…CHAS, and VSWC…CRAG. Residues 880 to 942 form the PWWP 2 domain; the sequence is FQDIIWVKLG…QARVFPYMEG (63 aa). The AWS domain maps to 1011 to 1061; it reads SEIPKCNCKPTDENPCGSDSECLNRMLMFECHPQVCPAGEYCQNQCFTKRQ. Residues Cys-1016, Cys-1018, Cys-1026, Cys-1032, Cys-1041, Cys-1046, and Cys-1052 each contribute to the Zn(2+) site. Residues 1063–1180 form the SET domain; that stretch reads PETKIIKTDG…AGTELTFNYN (118 aa). S-adenosyl-L-methionine contacts are provided by residues Trp-1075, 1115-1118, and 1141-1142; these read THFY and NH. Cys-1144 is a Zn(2+) binding site. Asn-1186 contributes to the S-adenosyl-L-methionine binding site. In terms of domain architecture, Post-SET spans 1187-1203; it reads EKTVCRCGASNCSGFLG. Cys-1191 contributes to the Zn(2+) binding site. Arg-1192 lines the S-adenosyl-L-methionine pocket. Zn(2+)-binding residues include Cys-1193 and Cys-1198. The disordered stretch occupies residues 1206-1232; the sequence is PKTSASLSSEEKGKKAKKKTRRRRAKG. Residues 1219 to 1230 are compositionally biased toward basic residues; sequence KKAKKKTRRRRA. Residues 1239–1286 form a PHD-type 4; atypical zinc finger; that stretch reads EDECFRCGDGGQLVLCDRKFCTKAYHLSCLGLGKRPFGKWECPWHHCD. The segment at 1329–1365 is disordered; it reads RADSSSSTKTEKPFPESLKSKGKRKKRRCWRRVTDGK. A compositionally biased stretch (basic residues) spans 1348–1359; it reads SKGKRKKRRCWR.

This sequence belongs to the class V-like SAM-binding methyltransferase superfamily. Histone-lysine methyltransferase family. SET2 subfamily. Interacts with HDAC1. Interacts (via PHD-type zinc fingers 1, 2 and 3) with SALL1. Interacts (via PHD-type 1, 2 and 3) with SALL4. Interacts with NANOG. Interacts with OGT. Interacts (via HMG box) with NKX2-5. As to expression, during B-cell development, expressed in early B2 cell progenitors (pre- and pro-B cells) with a decrease in expression at later stages.

The protein resides in the nucleus. The protein localises to the chromosome. The catalysed reaction is L-lysyl(36)-[histone H3] + S-adenosyl-L-methionine = N(6)-methyl-L-lysyl(36)-[histone H3] + S-adenosyl-L-homocysteine + H(+). It carries out the reaction L-lysyl(36)-[histone H3] + 2 S-adenosyl-L-methionine = N(6),N(6)-dimethyl-L-lysyl(36)-[histone H3] + 2 S-adenosyl-L-homocysteine + 2 H(+). Histone methyltransferase which specifically dimethylates nucleosomal histone H3 at 'Lys-36' (H3K36me2). Also monomethylates nucleosomal histone H3 at 'Lys-36' (H3K36me) in vitro. Does not trimethylate nucleosomal histone H3 at 'Lys-36' (H3K36me3). However, specifically trimethylates histone H3 at 'Lys-36' (H3K36me3) at euchromatic regions in embryonic stem (ES) cells. By methylating histone H3 at 'Lys-36', involved in the regulation of gene transcription during various biological processes. In ES cells, associates with developmental transcription factors such as SALL1 and represses inappropriate gene transcription mediated by histone deacetylation. During heart development, associates with transcription factor NKX2-5 to repress transcription of NKX2-5 target genes. Plays an essential role in adipogenesis, by regulating expression of genes involved in pre-adipocyte differentiation. During T-cell receptor (TCR) and CD28-mediated T-cell activation, promotes the transcription of transcription factor BCL6 which is required for follicular helper T (Tfh) cell differentiation. During B-cell development, required for the generation of the B1 lineage. During B2 cell activation, may contribute to the control of isotype class switch recombination (CRS), splenic germinal center formation, and the humoral immune response. Plays a role in class switch recombination of the immunoglobulin heavy chain (IgH) locus during B-cell activation. By regulating the methylation of histone H3 at 'Lys-36' and histone H4 at 'Lys-20' at the IgH locus, involved in TP53BP1 recruitment to the IgH switch region and promotes the transcription of IgA. Functionally, histone methyltransferase which specifically dimethylates nucleosomal histone H3 at 'Lys-36' (H3K36me2). Mono-, di- and tri-methylates histone H3 at 'Lys-27' (H3K27me, H3K27me2, H3K27me3). Methylation of histone H3 at 'Lys-27' is controversial. May act as a transcription regulator that binds DNA and suppresses IL5 transcription through HDAC recruitment. This is Histone-lysine N-methyltransferase NSD2 (Nsd2) from Mus musculus (Mouse).